The following is a 314-amino-acid chain: Methionyl-tRNA formyltransferase (314 aa).

A (6S)-5,6,7,8-tetrahydrofolate-binding site is contributed by 111–114; sequence SLLP.

Belongs to the Fmt family.

The enzyme catalyses L-methionyl-tRNA(fMet) + (6R)-10-formyltetrahydrofolate = N-formyl-L-methionyl-tRNA(fMet) + (6S)-5,6,7,8-tetrahydrofolate + H(+). Functionally, attaches a formyl group to the free amino group of methionyl-tRNA(fMet). The formyl group appears to play a dual role in the initiator identity of N-formylmethionyl-tRNA by promoting its recognition by IF2 and preventing the misappropriation of this tRNA by the elongation apparatus. This chain is Methionyl-tRNA formyltransferase, found in Chlorobium luteolum (strain DSM 273 / BCRC 81028 / 2530) (Pelodictyon luteolum).